The chain runs to 692 residues: UvrABC system protein B (692 aa).

A Helicase ATP-binding domain is found at 32–418; it reads DNIENGEKAQ…QTDTIVEQII (387 aa). 45–52 contacts ATP; the sequence is GATGTGKT. A Beta-hairpin motif is present at residues 98 to 121; it reads YYDYYQPEAYVPSSDTYIEKDSSV. In terms of domain architecture, Helicase C-terminal spans 436–631; it reads QIDDLVGEIH…TIKKEIRDLI (196 aa). The region spanning 656–691 is the UVR domain; it reads KALVKKLEKEMQQAASALDFEGAAQLRDMVLELRAM.

The protein belongs to the UvrB family. In terms of assembly, forms a heterotetramer with UvrA during the search for lesions. Interacts with UvrC in an incision complex.

The protein localises to the cytoplasm. Functionally, the UvrABC repair system catalyzes the recognition and processing of DNA lesions. A damage recognition complex composed of 2 UvrA and 2 UvrB subunits scans DNA for abnormalities. Upon binding of the UvrA(2)B(2) complex to a putative damaged site, the DNA wraps around one UvrB monomer. DNA wrap is dependent on ATP binding by UvrB and probably causes local melting of the DNA helix, facilitating insertion of UvrB beta-hairpin between the DNA strands. Then UvrB probes one DNA strand for the presence of a lesion. If a lesion is found the UvrA subunits dissociate and the UvrB-DNA preincision complex is formed. This complex is subsequently bound by UvrC and the second UvrB is released. If no lesion is found, the DNA wraps around the other UvrB subunit that will check the other stand for damage. This is UvrABC system protein B from Lactococcus lactis subsp. lactis (strain IL1403) (Streptococcus lactis).